Reading from the N-terminus, the 505-residue chain is Maturase K (505 aa).

This sequence belongs to the intron maturase 2 family. MatK subfamily.

The protein localises to the plastid. It localises to the chloroplast. Usually encoded in the trnK tRNA gene intron. Probably assists in splicing its own and other chloroplast group II introns. This Portulacaria afra (Elephant's food) protein is Maturase K.